The chain runs to 247 residues: Acetoacetate decarboxylase (247 aa).

Lys116 functions as the Schiff-base intermediate with acetoacetate in the catalytic mechanism.

This sequence belongs to the ADC family.

The catalysed reaction is acetoacetate + H(+) = acetone + CO2. In terms of biological role, catalyzes the conversion of acetoacetate to acetone and carbon dioxide. The protein is Acetoacetate decarboxylase of Ralstonia nicotianae (strain ATCC BAA-1114 / GMI1000) (Ralstonia solanacearum).